Reading from the N-terminus, the 355-residue chain is Histidinol-phosphate aminotransferase (355 aa).

Residue Lys222 is modified to N6-(pyridoxal phosphate)lysine.

This sequence belongs to the class-II pyridoxal-phosphate-dependent aminotransferase family. Histidinol-phosphate aminotransferase subfamily. Pyridoxal 5'-phosphate is required as a cofactor.

It carries out the reaction L-histidinol phosphate + 2-oxoglutarate = 3-(imidazol-4-yl)-2-oxopropyl phosphate + L-glutamate. It functions in the pathway amino-acid biosynthesis; L-histidine biosynthesis; L-histidine from 5-phospho-alpha-D-ribose 1-diphosphate: step 7/9. The protein is Histidinol-phosphate aminotransferase of Natronomonas pharaonis (strain ATCC 35678 / DSM 2160 / CIP 103997 / JCM 8858 / NBRC 14720 / NCIMB 2260 / Gabara) (Halobacterium pharaonis).